A 108-amino-acid chain; its full sequence is Small ribosomal subunit protein uS10 (108 aa).

Belongs to the universal ribosomal protein uS10 family. In terms of assembly, part of the 30S ribosomal subunit.

Functionally, involved in the binding of tRNA to the ribosomes. This is Small ribosomal subunit protein uS10 from Ehrlichia chaffeensis (strain ATCC CRL-10679 / Arkansas).